The following is an 830-amino-acid chain: MPPSAGLATESLPAATCPAKKDAYAAAASPESETKLAAGDERAPLVRTTRISTTTIKLYRLTIFVRIAIFVLFFKWRITYAARAISSTDAGGIGMSKAATFWTASIAGELWFAFMWVLDQLPKTMPVRRAVDVTALNDDTLLPAMDVFVTTADPDKEPPLATANTVLSILAAGYPAGKVTCYVSDDAGAEVTRGAVVEAARFAALWVPFCRKHGVEPRNPEAYFNGGEGGGGGGKARVVARGSYKGRAWPELVRDRRRVRREYEEMRLRIDALQAADARRRRCGAADDHAGVVQVLIDSAGSAPQLGVADGSKLIDLASVDVRLPALVYVCREKRRGRAHHRKAGAMNALLRASAVLSNAPFILNLDCDHYVNNSQALRAGICFMIERRGGGAEDAGDVAFVQFPQRFDGVDPGDRYANHNRVFFDCTELGLDGLQGPIYVGTGCLFRRVALYGVDPPRWRSPGGGVAADPAKFGESAPFLASVRAEQSHSRDDGDAIAEASALVSCAYEDGTAWGRDVGWVYGTVTEDVATGFCMHRRGWRSAYYAAAPDAFRGTAPINLADRLHQVLRWAAGSLEIFFSRNNALLAGGRRRLHPLQRAAYLNTTVYPFTSLFLMAYCLFPAIPLIAGGGGWNAAPTPTYVAFLAALMVTLAAVAVLETRWSGIALGEWWRNEQFWMVSATSAYLAAVAQVALKVATGKEISFKLTSKHLASSATPVAGKDRQYAELYAVRWTALMAPTAAALAVNVASMAAAGGGGRWWWWDAPSAAAAAAAALPVAFNVWVVVHLYPFALGLMGRRSKAVRPILFLFAVVAYLAVRFLCLLLQFHTA.

2 helical membrane passes run 61–81 (LTIF…ITYA) and 98–118 (AATF…MWVL). Residue aspartate 186 is part of the active site. Positions 251 to 279 (ELVRDRRRVRREYEEMRLRIDALQAADAR) form a coiled coil. Residues aspartate 367 and aspartate 369 each contribute to the substrate site. The active site involves aspartate 529. A run of 6 helical transmembrane segments spans residues 613–633 (LFLM…GGGW), 638–658 (TPTY…VAVL), 676–696 (FWMV…ALKV), 735–755 (ALMA…AAAG), 776–796 (LPVA…LGLM), and 805–825 (PILF…CLLL).

It belongs to the glycosyltransferase 2 family. Plant cellulose synthase-like F subfamily. In terms of tissue distribution, expressed in mature pollen.

The protein localises to the golgi apparatus membrane. Functionally, may catalyze both beta-1,3 and beta-1,4 glycosidic linkage on beta-D-glucan. Essential for (1,3;1,4)-beta-D-glucans synthesis in grasses and cereals (Poaceae). The mixed-linked glucans (which are not present in walls of dicotyledons or most other monocotyledonous plants) are particularly important constituents of the walls of the starchy endosperm and aleurone cells of cereal grains such as oats, wheat, rice and barley. They can account for up to 70% by weight of the wall. The protein is Probable mixed-linked glucan synthase 7 (CSLF7) of Oryza sativa subsp. japonica (Rice).